A 495-amino-acid polypeptide reads, in one-letter code: Keratin, type II cytoskeletal 74 (495 aa).

The interval Met1–Gln105 is head. The coil 1A stretch occupies residues Glu106–Leu141. In terms of domain architecture, IF rod spans Glu106–Met419. The linker 1 stretch occupies residues Gln142 to His160. The segment at Ile161–Leu252 is coil 1B. The interval Gln253–Ile276 is linker 12. Residues Ile277–Glu415 are coil 2. Positions Glu416–Thr495 are tail. Residues Asp449–Thr495 are disordered. Over residues Gly457 to Ser472 the composition is skewed to polar residues.

The protein belongs to the intermediate filament family. Heterotetramer of two type I and two type II keratins. Expressed in epidermis with a particularly strong staining in the nail matrix, nail bed and hyponychium (at protein level).

Functionally, has a role in hair formation. Specific component of keratin intermediate filaments in the inner root sheath (IRS) of the hair follicle. The polypeptide is Keratin, type II cytoskeletal 74 (Mus musculus (Mouse)).